Consider the following 758-residue polypeptide: MVRTKNQSSSSSASSSSTKSPIKSSSGAGSSGGGVGGRQSTHRSSSASNVAAVVAGGSSAAGGGSSSNRRSPGSSPDGDDDTTTTDDLTPTTCSPRSGHHHTYGGYSSSVHKQNLYVVSFPIIFLFNVLRSLIYQLFCIFRYLYGASTKVIYRPHRRDCNIEIVVQNSSKEQQQSLNHPSELSREGDGQEQQLSNQPQRFRPIQPLEMAANRPGGGYSPGPGDPLLAKQKHHHRRAFEYISKALKIDEENEGHKELAIELYRKGIKELEDGIAVDCWSGRGDVWDRAQRLHDKMQTNLSMARDRLHFLALREQDLQMQRLSLKEKPKVQAPSKPQKTREPMLAGMTNEPMKLRVRSSGYGPKATTSAQPTASGRKLTIGSKRPVNLAVANKSQTLPRNLGSKTSVGAVQRQPAKTAATPPAVRRQFSSGRNTPPQRSRTPINNNGPSGSGASTPVVSVKGVEQKLVQLILDEIVEGGAKVEWTDIAGQDVAKQALQEMVILPSVRPELFTGLRAPAKGLLLFGPPGNGKTLLARAVATECSATFLNISAASLTSKYVGDGEKLVRALFAVARHMQPSIIFIDEVDSLLSERSSSEHEASRRLKTEFLVEFDGLPGNPDGDRIVVLAATNRPQELDEAALRRFTKRVYVSLPDEQTRELLLNRLLQKQGSPLDTEALRRLAKITDGYSGSDLTALAKDAALEPIRELNVEQVKCLDISAMRAITEQDFHSSLKRIRRSVAPQSLNSYEKWSQDYGDITI.

A disordered region spans residues 1–99 (MVRTKNQSSS…PTTCSPRSGH (99 aa)). Topologically, residues 1–121 (MVRTKNQSSS…KQNLYVVSFP (121 aa)) are cytoplasmic. Positions 1-210 (MVRTKNQSSS…RPIQPLEMAA (210 aa)) are required for localization to punctate cytoplasmic foci. Composition is skewed to low complexity over residues 8-28 (SSSSSASSSSTKSPIKSSSGA), 43-58 (RSSSASNVAAVVAGGS), 66-76 (SSNRRSPGSSP), and 85-95 (TDDLTPTTCSP). The segment at residues 122-142 (IIFLFNVLRSLIYQLFCIFRY) is an intramembrane region (helical). The Cytoplasmic segment spans residues 143–758 (LYGASTKVIY…WSQDYGDITI (616 aa)). Polar residues-rich tracts occupy residues 169–180 (SKEQQQSLNHPS) and 189–198 (QEQQLSNQPQ). The segment at 169-203 (SKEQQQSLNHPSELSREGDGQEQQLSNQPQRFRPI) is disordered. The tract at residues 208–758 (MAANRPGGGY…WSQDYGDITI (551 aa)) is sufficient for interaction with microtubules and microtubule severing. The region spanning 233–308 (HRRAFEYISK…SMARDRLHFL (76 aa)) is the MIT domain. Disordered stretches follow at residues 353 to 375 (RVRSSGYGPKATTSAQPTASGRK) and 390 to 454 (NKSQ…ASTP). Composition is skewed to polar residues over residues 390–406 (NKSQTLPRNLGSKTSVG) and 425–454 (QFSSGRNTPPQRSRTPINNNGPSGSGASTP). The required for interaction with microtubules stretch occupies residues 443 to 455 (NNGPSGSGASTPV). 523-530 (GPPGNGKT) lines the ATP pocket.

The protein belongs to the AAA ATPase family. Spastin subfamily. As to quaternary structure, homohexamer. The homohexamer is stabilized by ATP-binding. The homohexamer may adopt a ring conformation through which microtubules pass prior to being severed. Interacts with microtubules. Interacts with atl; may be involved in microtubule dynamics.

Its subcellular location is the membrane. The protein resides in the cytoplasm. The protein localises to the cytoskeleton. It is found in the microtubule organizing center. It localises to the centrosome. Its subcellular location is the chromosome. The protein resides in the lipid droplet. It catalyses the reaction n ATP + n H2O + a microtubule = n ADP + n phosphate + (n+1) alpha/beta tubulin heterodimers.. Functionally, ATP-dependent microtubule severing protein. Stimulates microtubule minus-end depolymerization and poleward microtubule flux in the mitotic spindle. Regulates microtubule stability in the neuromuscular junction synapse. Involved in lipid metabolism by regulating the size and distribution of lipid droplets. Involved in axon regeneration by regulating microtubule severing. This Drosophila erecta (Fruit fly) protein is Spastin.